Consider the following 93-residue polypeptide: YcgL domain-containing protein VIBHAR_01387 (93 aa).

The region spanning 1–84 (MLCSIYKSSR…PPENLLEKYK (84 aa)) is the YcgL domain.

In Vibrio campbellii (strain ATCC BAA-1116), this protein is YcgL domain-containing protein VIBHAR_01387.